The primary structure comprises 317 residues: Epidermal growth factor-like protein (317 aa).

The first 23 residues, 1-23, serve as a signal peptide directing secretion; it reads MDFKIFLFLTAIFMIVGVTVSTA. The tract at residues 24-33 is may be required for E.coli agglutination activity; sequence TTNPTAPRAY. EGF-like domains follow at residues 93–128, 130–161, 163–195, 208–243, 245–280, and 282–315; these read HCTP…GKCI, VCPG…RYCT, GCTR…GTCQ, ACEP…KVCA, KCSQ…NRCI, and YCAA…NVCV. Disulfide bonds link Cys98–Cys107, Cys102–Cys113, Cys115–Cys127, Cys131–Cys140, Cys135–Cys145, Cys147–Cys160, Cys164–Cys174, Cys168–Cys180, Cys182–Cys194, Cys213–Cys222, Cys217–Cys228, Cys230–Cys242, Cys246–Cys255, Cys250–Cys261, Cys263–Cys279, Cys283–Cys292, Cys287–Cys298, and Cys300–Cys314.

It is found in the secreted. Its function is as follows. Binds to lipopolysaccharides (LPS) present on the cell walls of Gram-negative bacteria, behaving as a pattern recognition receptor (PRR). Induces bacterial aggregation and enhances their subsequent clearance by the innate immune response. Binds to the inner core oligosaccharides region of rough-type bacterial LPS. Displays activity against the Gram-negative bacterium E.coli. Does not display any activity against the Gram-positive bacterium S.aureus or the fungi C.albicans. This chain is Epidermal growth factor-like protein, found in Holotrichia diomphalia (Korean black chafer).